The primary structure comprises 1320 residues: Phosphoribosylformylglycinamidine synthase (1320 aa).

Residues 310-321 (GAATGSGGEIRD) and alanine 686 each bind ATP. 4 residues coordinate Mg(2+): aspartate 687, glutamate 726, asparagine 730, and aspartate 894. Residue serine 896 coordinates ATP. A Glutamine amidotransferase type-1 domain is found at 1067-1320 (VAILREQGVN…MFRNARAFIG (254 aa)). The active-site Nucleophile is the cysteine 1160. Catalysis depends on residues histidine 1285 and glutamate 1287.

In the N-terminal section; belongs to the FGAMS family. Monomer.

It localises to the cytoplasm. The catalysed reaction is N(2)-formyl-N(1)-(5-phospho-beta-D-ribosyl)glycinamide + L-glutamine + ATP + H2O = 2-formamido-N(1)-(5-O-phospho-beta-D-ribosyl)acetamidine + L-glutamate + ADP + phosphate + H(+). Its pathway is purine metabolism; IMP biosynthesis via de novo pathway; 5-amino-1-(5-phospho-D-ribosyl)imidazole from N(2)-formyl-N(1)-(5-phospho-D-ribosyl)glycinamide: step 1/2. Functionally, phosphoribosylformylglycinamidine synthase involved in the purines biosynthetic pathway. Catalyzes the ATP-dependent conversion of formylglycinamide ribonucleotide (FGAR) and glutamine to yield formylglycinamidine ribonucleotide (FGAM) and glutamate. In Colwellia psychrerythraea (strain 34H / ATCC BAA-681) (Vibrio psychroerythus), this protein is Phosphoribosylformylglycinamidine synthase.